Here is a 1993-residue protein sequence, read N- to C-terminus: [F-actin]-monooxygenase MICAL3 (1993 aa).

A monooxygenase domain region spans residues 2–494 (EERKQETTNQ…RHLYDSGETK (493 aa)). Residues Cys97, 116 to 118 (EKR), 123 to 125 (RNN), Phe183, Tyr298, and Asp398 each bind FAD. The Calponin-homology (CH) domain maps to 518–624 (VARSSKLLGW…YLTQFYEMFK (107 aa)). Ser649 is modified (phosphoserine). The tract at residues 658-704 (GQTISRKRSPKDKKEKDSDGAGKRRKTSQSEEEEPPRSYKGERPTLV) is disordered. Residues 669 to 679 (DKKEKDSDGAG) are compositionally biased toward basic and acidic residues. Ser685 and Ser687 each carry phosphoserine. One can recognise an LIM zinc-binding domain in the interval 762–824 (DTCYFCQKRV…KPHYCYRLSG (63 aa)). Residues Cys764, Cys767, His785, Cys788, Cys791, Cys794, Cys814, and His817 each contribute to the Zn(2+) site. A disordered region spans residues 854 to 886 (NGLASVAASSAERSPGTSMNGLEEPSIAKRLRG). Over residues 860–873 (AASSAERSPGTSMN) the composition is skewed to polar residues. Thr887 is subject to Phosphothreonine. 4 disordered regions span residues 905–1023 (ELEE…RLQQ), 1039–1309 (WTHI…LSGP), 1332–1546 (IRRS…FFTP), and 1559–1837 (KENG…EELK). The span at 938 to 951 (SEMEEEEEEDDEDD) shows a compositional bias: acidic residues. Over residues 975-988 (GRSEEELEASKNFE) the composition is skewed to basic and acidic residues. Ser977 carries the phosphoserine modification. A compositionally biased stretch (acidic residues) spans 989–1014 (PEEEEEEEEYEEEDEEYEEEEEEESS). The segment covering 1039–1051 (WTHIREREAEERM) has biased composition (basic and acidic residues). Positions 1065 to 1090 (DEDDLEEDADSEPAETEGEAAEDGDP) are enriched in acidic residues. Residues 1111–1148 (EAEHRLQSQAKVKAELELRVSENEEEKPSDAPKQEERG) show a composition bias toward basic and acidic residues. Residues Ser1131 and Ser1187 each carry the phosphoserine modification. A compositionally biased stretch (basic and acidic residues) spans 1199–1212 (LREKPKAEVPEEQK). Polar residues predominate over residues 1230–1239 (SPTSPTSLQP). Residues 1245 to 1255 (PPTPPTPPPTQ) are compositionally biased toward pro residues. The segment covering 1257-1275 (PICSQPQPSSDASIPSPTK) has biased composition (polar residues). Ser1272 is subject to Phosphoserine. Position 1274 is a phosphothreonine (Thr1274). Residues Ser1276 and Ser1335 each carry the phosphoserine modification. At Thr1339 the chain carries Phosphothreonine. A phosphoserine mark is found at Ser1369 and Ser1382. The span at 1405–1420 (PSDKELRSSQEERRDL) shows a compositional bias: basic and acidic residues. Low complexity predominate over residues 1421-1433 (SSSSGLGLHDSSS). A Phosphoserine modification is found at Ser1431. A compositionally biased stretch (polar residues) spans 1434–1452 (NMKTLGSQSFNTSDSTMLT). The residue at position 1452 (Thr1452) is a Phosphothreonine. Over residues 1454–1465 (PSSPPPPPPPNE) the composition is skewed to pro residues. The segment covering 1516–1530 (SVDEIPFADDVEDTY) has biased composition (acidic residues). Positions 1584-1600 (EAKELAEERMRAREKSV) are enriched in basic and acidic residues. Residues 1623–1633 (SSRSHTAQSQG) show a composition bias toward polar residues. Ser1640 is modified (phosphoserine). Over residues 1665–1685 (SPPSDSGGPDGSVTSSEGSSG) the composition is skewed to low complexity. Positions 1686–1704 (KSKKRSSLFSPRRNKKEKK) are enriched in basic residues. 2 positions are modified to phosphoserine: Ser1692 and Ser1695. Positions 1754-1763 (TPSSGATVDS) are enriched in polar residues. Residues 1795 to 1811 (ILERSSQKSKREPRTYT) show a composition bias toward basic and acidic residues. Residues 1817 to 1983 (AKLTRRVQKA…EEDKDLEAAM (167 aa)) are a coiled coil. Positions 1819-1830 (LTRRVQKAARRQ) are enriched in basic residues. Positions 1832-1981 (KQEELKRLHR…EKEEDKDLEA (150 aa)) constitute a bMERB domain. Phosphoserine is present on Ser1903.

The protein belongs to the Mical family. Interacts with RAB1B, RAB8A, RAB10, RAB13 and RAB15 (in their GTP-bound forms); binding to RAB1B is of low affinity compared to other Rab proteins; at least in case of RAB8A can bind 2 molecules of RAB8A simultaneously through a high and a low affinity binding site, respectively. Interacts with ERC1 and RAB8A; may bridge ERC1 with RAB8A. Interacts with KIF23 and ERC1; enhances the interaction between KIF23 and ERC1. Interacts with NINL. The cofactor is FAD.

The protein resides in the cytoplasm. It localises to the cell cortex. It is found in the cytoskeleton. The protein localises to the nucleus. Its subcellular location is the midbody. The protein resides in the spindle. It localises to the cilium basal body. It carries out the reaction L-methionyl-[F-actin] + NADPH + O2 + H(+) = L-methionyl-(R)-S-oxide-[F-actin] + NADP(+) + H2O. Functionally, monooxygenase that promotes depolymerization of F-actin by mediating oxidation of specific methionine residues on actin to form methionine-sulfoxide, resulting in actin filament disassembly and preventing repolymerization. In the absence of actin, it also functions as a NADPH oxidase producing H(2)O(2). Seems to act as Rab effector protein and play a role in vesicle trafficking. Involved in exocytic vesicles tethering and fusion: the monooxygenase activity is required for this process and implicates RAB8A associated with exocytotic vesicles. Required for cytokinesis. Contributes to stabilization and/or maturation of the intercellular bridge independently of its monooxygenase activity. Promotes recruitment of Rab8 and ERC1 to the intercellular bridge, and together these proteins are proposed to function in timely abscission. This chain is [F-actin]-monooxygenase MICAL3 (Mical3), found in Mus musculus (Mouse).